The sequence spans 271 residues: Fork head domain-containing protein FD5 (271 aa).

Positions 12 to 103 (QKPPYSYISL…FDMFENGSLL (92 aa)) form a DNA-binding region, fork-head.

Expressed in early embryogenesis in 14 symmetrical pairs of segmentally arranged neuroblasts and in developing peripheral nervous system. Also, later in embryogenesis, in a cluster of cells in head region.

Its subcellular location is the nucleus. In terms of biological role, involved in development during embryogenesis. The polypeptide is Fork head domain-containing protein FD5 (fd96Cb) (Drosophila melanogaster (Fruit fly)).